The sequence spans 702 residues: Methionine--tRNA ligase (702 aa).

Positions 14–24 match the 'HIGH' region motif; sequence PYANGPVHLGH. Cys146, Cys149, Cys159, and Cys162 together coordinate Zn(2+). The short motif at 344-348 is the 'KMSKS' region element; the sequence is KFSKS. Lys347 serves as a coordination point for ATP. The 102-residue stretch at 601–702 folds into the tRNA-binding domain; the sequence is DFQKVDLRAA…GEKINGSSVQ (102 aa).

This sequence belongs to the class-I aminoacyl-tRNA synthetase family. MetG type 1 subfamily. Homodimer. Requires Zn(2+) as cofactor.

It is found in the cytoplasm. The catalysed reaction is tRNA(Met) + L-methionine + ATP = L-methionyl-tRNA(Met) + AMP + diphosphate. Its function is as follows. Is required not only for elongation of protein synthesis but also for the initiation of all mRNA translation through initiator tRNA(fMet) aminoacylation. The chain is Methionine--tRNA ligase from Chlorobium phaeovibrioides (strain DSM 265 / 1930) (Prosthecochloris vibrioformis (strain DSM 265)).